Consider the following 721-residue polypeptide: Protein mu-NS (721 aa).

The segment at 1–13 (MASFKGFSANTVP) is interaction with sigma-NS. Residues 1–38 (MASFKGFSANTVPVSKAKRDISSLAATPGLRSQSFTPS) are RNA-binding. The segment at 14 to 40 (VSKAKRDISSLAATPGLRSQSFTPSVD) is interaction with mu-2. Positions 471–721 (SNDVTDGIKL…IDFSVPTDEL (251 aa)) are involved in the formation of factory-like inclusions. Coiled coils occupy residues 522 to 559 (PLLS…KSAQ) and 628 to 684 (LMNG…ALNQ).

This sequence belongs to the orthoreovirus mu-NS protein family. As to quaternary structure, interacts with mu-2. Interacts with sigma-NS; in viral factories. Interacts with the inner capsid proteins lambda-1 and sigma-2, and outer capsid protein lambda-2; in viral factories. In terms of processing, the N-terminus is blocked.

Its subcellular location is the host cytoplasm. Functionally, non-structural protein implicated with protein sigma-NS in forming the matrix of viral factories, which are large inclusions in the host cytoplasm where replication intermediates are assembled and viral RNA replication takes place. Together with mu-2, recruits the other core proteins to these factories. Binds RNA and recruits viral mRNAs to sites of viral replication. In Reovirus type 3 (strain Dearing) (T3D), this protein is Protein mu-NS (M3).